A 718-amino-acid polypeptide reads, in one-letter code: Phenylalanine--tRNA ligase beta subunit (718 aa).

A tRNA-binding domain is found at 39 to 153 (LNEISGIKFG…IFDLESNPLK (115 aa)). One can recognise a B5 domain in the interval 386–460 (SKKTFLDLNY…RFYGLEKLKD (75 aa)). Residues Asp-438, Asp-444, and Asp-448 each coordinate Mg(2+).

It belongs to the phenylalanyl-tRNA synthetase beta subunit family. Type 1 subfamily. In terms of assembly, tetramer of two alpha and two beta subunits. It depends on Mg(2+) as a cofactor.

Its subcellular location is the cytoplasm. It catalyses the reaction tRNA(Phe) + L-phenylalanine + ATP = L-phenylalanyl-tRNA(Phe) + AMP + diphosphate + H(+). This is Phenylalanine--tRNA ligase beta subunit from Mesomycoplasma hyopneumoniae (strain J / ATCC 25934 / NCTC 10110) (Mycoplasma hyopneumoniae).